A 470-amino-acid polypeptide reads, in one-letter code: Uronate isomerase (470 aa).

This sequence belongs to the metallo-dependent hydrolases superfamily. Uronate isomerase family.

The enzyme catalyses D-glucuronate = D-fructuronate. The catalysed reaction is aldehydo-D-galacturonate = keto-D-tagaturonate. Its pathway is carbohydrate metabolism; pentose and glucuronate interconversion. This chain is Uronate isomerase, found in Salmonella arizonae (strain ATCC BAA-731 / CDC346-86 / RSK2980).